The chain runs to 324 residues: Type II restriction enzyme AplI (324 aa).

Belongs to the BsuBI/PstI type II restriction endonuclease family. Mg(2+) serves as cofactor.

The enzyme catalyses Endonucleolytic cleavage of DNA to give specific double-stranded fragments with terminal 5'-phosphates.. Its activity is regulated as follows. Activated by K(+) and Na(+) ions, whereas NH(4)(+) ions appear to inhibit endonuclease activity. Its function is as follows. A P subtype restriction enzyme that recognizes the double-stranded sequence 5'-CTGCAG-3' and cleaves after A-5. The polypeptide is Type II restriction enzyme AplI (aplIR) (Arthrospira platensis (strain NIES-39 / UTEX 3086 / IAM M-135) (Spirulina platensis)).